The following is an 89-amino-acid chain: Large ribosomal subunit protein uL23cz/uL23cy (89 aa).

Belongs to the universal ribosomal protein uL23 family. In terms of assembly, part of the 50S ribosomal subunit.

The protein resides in the plastid. Its subcellular location is the chloroplast. Functionally, binds to 23S rRNA. This Calycanthus floridus var. glaucus (Eastern sweetshrub) protein is Large ribosomal subunit protein uL23cz/uL23cy (rpl23-A).